Reading from the N-terminus, the 367-residue chain is Ribosome-binding ATPase YchF (367 aa).

Residues 2 to 258 (LSAGIVGLPN…LKLEQRQYFL (257 aa)) enclose the OBG-type G domain. 11–16 (NVGKST) contacts ATP. Residues serine 15 and threonine 35 each contribute to the Mg(2+) site. Positions 281-364 (NLWSFFTFGK…KDGDVCNFKF (84 aa)) constitute a TGS domain.

It belongs to the TRAFAC class OBG-HflX-like GTPase superfamily. OBG GTPase family. YchF/OLA1 subfamily. Mg(2+) is required as a cofactor.

Functionally, ATPase that binds to both the 70S ribosome and the 50S ribosomal subunit in a nucleotide-independent manner. In Mycoplasma genitalium (strain ATCC 33530 / DSM 19775 / NCTC 10195 / G37) (Mycoplasmoides genitalium), this protein is Ribosome-binding ATPase YchF.